Consider the following 385-residue polypeptide: Gibberellin 20 oxidase 5 (385 aa).

A Fe2OG dioxygenase domain is found at 224–324 (DGSGIFRCNY…RRSLVFFSCP (101 aa)). The Fe cation site is built by H249, D251, and H305. R315 is a catalytic residue.

It belongs to the iron/ascorbate-dependent oxidoreductase family. GA20OX subfamily. The cofactor is Fe(2+). L-ascorbate serves as cofactor. Expressed in 3-day-old seedlings and siliques. Detected in dry seeds, roots, old leaves and inflorescences.

The enzyme catalyses gibberellin A12 + 2 2-oxoglutarate + 3 O2 + H(+) = gibberellin A9 + 2 succinate + 3 CO2 + 2 H2O. It carries out the reaction gibberellin A53 + 2 2-oxoglutarate + 3 O2 + H(+) = gibberellin A20 + 2 succinate + 3 CO2 + 2 H2O. Its pathway is plant hormone biosynthesis; gibberellin biosynthesis. In terms of biological role, key oxidase enzyme in the biosynthesis of gibberellin that catalyzes the conversion of GA12 and GA53 to GA9 and GA20 respectively, via a three-step oxidation at C-20 of the GA skeleton. The sequence is that of Gibberellin 20 oxidase 5 (GA20OX5) from Arabidopsis thaliana (Mouse-ear cress).